Here is a 100-residue protein sequence, read N- to C-terminus: MAKKSMIEREKKRKKLVEKYAEKRRELKEQFMKAEDLEQKIELHRQIQRLPRNSAPSRVRNRCWLTGRPRGFYRDFGLSRNVIREMAHEGLLPGVVKSSW.

This sequence belongs to the universal ribosomal protein uS14 family. Part of the 30S ribosomal subunit. Contacts proteins S3 and S10.

Its function is as follows. Binds 16S rRNA, required for the assembly of 30S particles and may also be responsible for determining the conformation of the 16S rRNA at the A site. The chain is Small ribosomal subunit protein uS14 from Trichodesmium erythraeum (strain IMS101).